An 876-amino-acid chain; its full sequence is Nitrogen regulatory protein areA (876 aa).

A compositionally biased stretch (gly residues) spans 1 to 11 (MSGLTLGGGSG). Disordered regions lie at residues 1-65 (MSGL…PTDS), 137-159 (QERERAQQQARASSQKSPVPGMS), 192-248 (IPFS…ESEF), 393-413 (FSPPPSGYQSTASTPQPAYDG), 451-498 (YMYN…PNEF), and 573-672 (SADM…GPTT). Composition is skewed to polar residues over residues 198 to 211 (DHPSPSTTKASEAT), 399 to 408 (GYQSTASTPQ), and 455 to 480 (QGGSSQDITQQNAHMGAQSSSMQSPG). Over residues 602-611 (VRNRDQDPRR) the composition is skewed to basic and acidic residues. Over residues 615–640 (ARTSSTPNTAQLLRQSMQNQSSHTSP) the composition is skewed to polar residues. Residues 673–697 (CTNCFTQTTPLWRRNPEGQPLCNAC) form a GATA-type zinc finger. The H-T-H motif DNA-binding region spans 721–742 (NRNSANSLAVGSSRVSKKSARK). Polar residues-rich tracts occupy residues 724 to 734 (SANSLAVGSSR) and 742 to 766 (KNSVQQVTPTAPTSSRAQSNTTSES). The disordered stretch occupies residues 724–856 (SANSLAVGSS…MPPAAVNPAN (133 aa)). Composition is skewed to low complexity over residues 782–798 (PIAAAPPKSSSAATTSP) and 828–855 (SPSSTSSGGRSKVVPLAPAMPPAAVNPA).

As to quaternary structure, interacts with nmrA.

The protein resides in the nucleus. Transcription activator that binds the consensus DNA element 5'-CGATAG-3' and mediates nitrogen metabolite repression. Activates the transcription of uapA. This Emericella nidulans (strain FGSC A4 / ATCC 38163 / CBS 112.46 / NRRL 194 / M139) (Aspergillus nidulans) protein is Nitrogen regulatory protein areA (areA).